Here is a 238-residue protein sequence, read N- to C-terminus: tRNA (guanine-N(7)-)-methyltransferase (238 aa).

Residues E71, E96, D123, and D146 each coordinate S-adenosyl-L-methionine. D146 is a catalytic residue. Substrate is bound by residues K150, D182, and 217–220 (TKFE).

Belongs to the class I-like SAM-binding methyltransferase superfamily. TrmB family.

The enzyme catalyses guanosine(46) in tRNA + S-adenosyl-L-methionine = N(7)-methylguanosine(46) in tRNA + S-adenosyl-L-homocysteine. It functions in the pathway tRNA modification; N(7)-methylguanine-tRNA biosynthesis. In terms of biological role, catalyzes the formation of N(7)-methylguanine at position 46 (m7G46) in tRNA. This is tRNA (guanine-N(7)-)-methyltransferase from Methylobacillus flagellatus (strain ATCC 51484 / DSM 6875 / VKM B-1610 / KT).